A 196-amino-acid chain; its full sequence is METNGSFSGARLVDGKWIIPESRRKDGSVRRERAVKPGYTAPEDIKRYRPGRGNFASLEKQMKKLQLSNDASTSKSIDRPPISELEKEKLERPLSNKKKEKNDHKAESLKHDYDSVGEKRISKDSVKHLDKTYSSIDSKKDFKYNFPKTQAPEWRRGAKPLSKTSEPSVYSEKMSKRENKKSINTVDKKTGYKEKE.

A compositionally biased stretch (basic and acidic residues) spans 21–35 (ESRRKDGSVRRERAV). Disordered stretches follow at residues 21–53 (ESRRKDGSVRRERAVKPGYTAPEDIKRYRPGRG) and 65–196 (LQLS…KEKE). The span at 66 to 75 (QLSNDASTSK) shows a compositional bias: polar residues. 3 stretches are compositionally biased toward basic and acidic residues: residues 84–94 (ELEKEKLERPL), 100–143 (EKND…KDFK), and 173–196 (KMSKRENKKSINTVDKKTGYKEKE).

This is an uncharacterized protein from Schizosaccharomyces pombe (strain 972 / ATCC 24843) (Fission yeast).